A 130-amino-acid polypeptide reads, in one-letter code: Small ribosomal subunit protein uS8 (130 aa).

Belongs to the universal ribosomal protein uS8 family. As to quaternary structure, part of the 30S ribosomal subunit. Contacts proteins S5 and S12.

In terms of biological role, one of the primary rRNA binding proteins, it binds directly to 16S rRNA central domain where it helps coordinate assembly of the platform of the 30S subunit. The protein is Small ribosomal subunit protein uS8 of Stutzerimonas stutzeri (strain A1501) (Pseudomonas stutzeri).